Reading from the N-terminus, the 193-residue chain is MASLIFTYAAMNAGKSASLLIAAHNYKERGMSVLVLKPAIDTRDSVCEVVSRIGIKQEANIITDDMDIFEFYKWAEAQKDIHCVFVDEAQFLKTEQVHQLSRIVDTYNVPVMAYGLRTDFAGKLFEGSKELLAIADKLIELKAVCHCGKKAIMTARLMEDGTPVKEGNQICIGDEIYVSLCRKHWNELTKKLG.

9-16 (AAMNAGKS) is an ATP binding site.

It belongs to the thymidine kinase family.

The catalysed reaction is thymidine + ATP = dTMP + ADP + H(+). Functionally, this thymidine kinase is one of the enzymes that catalyze DNA precursor synthesis. Although tk is a nonessential gene, some strains of host E.coli do not support the growth of phages that lack this gene. This Escherichia coli (Bacteriophage T4) protein is Thymidine kinase (TK).